We begin with the raw amino-acid sequence, 665 residues long: DNA ligase (665 aa).

NAD(+)-binding positions include 31 to 35 (DKEFD), 80 to 81 (SL), and glutamate 110. Residue lysine 112 is the N6-AMP-lysine intermediate of the active site. NAD(+) is bound by residues arginine 133, glutamate 170, lysine 285, and lysine 309. Residues cysteine 403, cysteine 406, cysteine 421, and cysteine 427 each contribute to the Zn(2+) site. A BRCT domain is found at 587–665 (GHTDKLAGQS…NEEEFLKLIS (79 aa)).

This sequence belongs to the NAD-dependent DNA ligase family. LigA subfamily. The cofactor is Mg(2+). Requires Mn(2+) as cofactor.

The catalysed reaction is NAD(+) + (deoxyribonucleotide)n-3'-hydroxyl + 5'-phospho-(deoxyribonucleotide)m = (deoxyribonucleotide)n+m + AMP + beta-nicotinamide D-nucleotide.. DNA ligase that catalyzes the formation of phosphodiester linkages between 5'-phosphoryl and 3'-hydroxyl groups in double-stranded DNA using NAD as a coenzyme and as the energy source for the reaction. It is essential for DNA replication and repair of damaged DNA. The polypeptide is DNA ligase (Bacteroides fragilis (strain ATCC 25285 / DSM 2151 / CCUG 4856 / JCM 11019 / LMG 10263 / NCTC 9343 / Onslow / VPI 2553 / EN-2)).